The chain runs to 563 residues: Rhodopsin kinase GRK1 (563 aa).

Residues 1–15 (MDFGSLETVVANSAF) form an interaction with RCVRN region. Residues 1-189 (MDFGSLETVV…LEAQPMGEDW (189 aa)) are N-terminal. Phosphoserine is present on Ser5. A Phosphothreonine modification is found at Thr8. The residue at position 21 (Ser21) is a Phosphoserine; by PKA and autocatalysis. One can recognise an RGS domain in the interval 58–175 (FESVCLEQPI…LGSLYFLRFL (118 aa)). Positions 190–455 (FLDFRVLGKG…CDKLRAHPLF (266 aa)) constitute a Protein kinase domain. Residues 196-204 (LGKGGFGEV) and Lys219 contribute to the ATP site. The active-site Proton acceptor is Asp317. In terms of domain architecture, AGC-kinase C-terminal spans 456-521 (KDLNWRQLEA…GNCPIPWQEE (66 aa)). The segment at 456 to 563 (KDLNWRQLEA…SSKSGMCLVS (108 aa)) is C-terminal. Ser491 bears the Phosphoserine; by autocatalysis mark. Thr492 carries the post-translational modification Phosphothreonine; by autocatalysis. Residues 539–563 (QMPDDMKGISGGSSSSSKSGMCLVS) form a disordered region. Over residues 550-563 (GSSSSSKSGMCLVS) the composition is skewed to low complexity. Cysteine methyl ester is present on Cys560. The S-farnesyl cysteine moiety is linked to residue Cys560. Positions 561-563 (LVS) are cleaved as a propeptide — removed in mature form.

This sequence belongs to the protein kinase superfamily. AGC Ser/Thr protein kinase family. GPRK subfamily. As to quaternary structure, interacts (via N-terminus) with RCVRN (via C-terminus); the interaction is Ca(2+)-dependent. Interacts (when prenylated) with PDE6D; this promotes release from membranes. May form a complex composed of RHO, GRK1 and RCVRN in a Ca(2+)-dependent manner; RCVRN prevents the interaction between GRK1 and RHO. In terms of processing, autophosphorylated, Ser-21 is a minor site of autophosphorylation compared to Ser-491 and Thr-492. Phosphorylation at Ser-21 is regulated by light and activated by cAMP. Farnesylation is required for full activity. As to expression, retinal-specific. Expressed in rods and cones cells.

It localises to the membrane. The protein localises to the cell projection. Its subcellular location is the cilium. The protein resides in the photoreceptor outer segment. The catalysed reaction is L-threonyl-[rhodopsin] + ATP = O-phospho-L-threonyl-[rhodopsin] + ADP + H(+). The enzyme catalyses L-seryl-[rhodopsin] + ATP = O-phospho-L-seryl-[rhodopsin] + ADP + H(+). Inhibited by RCVRN, which prevents the interaction between GRK1 and RHO. Inhibition is calcium-dependent. Inhibited by phosphorylation of Ser-21. In terms of biological role, retina-specific kinase involved in the signal turnoff via phosphorylation of rhodopsin (RHO), the G protein- coupled receptor that initiates the phototransduction cascade. This rapid desensitization is essential for scotopic vision and permits rapid adaptation to changes in illumination. May play a role in the maintenance of the outer nuclear layer in the retina. The sequence is that of Rhodopsin kinase GRK1 from Homo sapiens (Human).